A 232-amino-acid polypeptide reads, in one-letter code: Peptidyl-prolyl cis-trans isomerase FKBP18, chloroplastic (232 aa).

Residues 108–226 (GSTAQVHFDC…ELNIELLRVT (119 aa)) form the PPIase FKBP-type domain.

It belongs to the FKBP-type PPIase family.

The protein resides in the plastid. It is found in the chloroplast thylakoid lumen. It catalyses the reaction [protein]-peptidylproline (omega=180) = [protein]-peptidylproline (omega=0). In terms of biological role, PPIases accelerate the folding of proteins. It catalyzes the cis-trans isomerization of proline imidic peptide bonds in oligopeptides. This is Peptidyl-prolyl cis-trans isomerase FKBP18, chloroplastic (FKBP18) from Arabidopsis thaliana (Mouse-ear cress).